The primary structure comprises 141 residues: Putative nickel-responsive regulator (141 aa).

Positions 80, 91, 93, and 99 each coordinate Ni(2+).

The protein belongs to the transcriptional regulatory CopG/NikR family. Ni(2+) is required as a cofactor.

Transcriptional regulator. This Methanococcus maripaludis (strain C5 / ATCC BAA-1333) protein is Putative nickel-responsive regulator.